The chain runs to 779 residues: Probable ATP-dependent RNA helicase DHX40 (779 aa).

The tract at residues Met1–Phe53 is disordered. Residues Arg13–Gly41 are compositionally biased toward basic and acidic residues. Positions Cys42–Phe53 are enriched in polar residues. The Helicase ATP-binding domain maps to Ile63–Pro231. Gly76 to Thr83 contacts ATP. A DEAH box motif is present at residues Asp173–His176. A Helicase C-terminal domain is found at Thr263 to Ala442.

This sequence belongs to the DEAD box helicase family. DEAH subfamily.

It carries out the reaction ATP + H2O = ADP + phosphate + H(+). Its function is as follows. Probable ATP-dependent RNA helicase. In Rattus norvegicus (Rat), this protein is Probable ATP-dependent RNA helicase DHX40 (Dhx40).